Consider the following 218-residue polypeptide: Thiopurine S-methyltransferase (218 aa).

S-adenosyl-L-methionine-binding residues include W10, L45, E66, and R123.

Belongs to the class I-like SAM-binding methyltransferase superfamily. TPMT family.

It localises to the cytoplasm. It carries out the reaction S-adenosyl-L-methionine + a thiopurine = S-adenosyl-L-homocysteine + a thiopurine S-methylether.. Functionally, involved in the biological cycling of tellurium and selenium. Tellurium resistance (Ter) mechanism. The protein is Thiopurine S-methyltransferase of Pseudomonas syringae pv. pisi.